Here is a 296-residue protein sequence, read N- to C-terminus: ATP synthase gamma chain (296 aa).

Residues 194-216 (IPASAGQAANDNAGSDQPAGDYE) are disordered.

It belongs to the ATPase gamma chain family. In terms of assembly, F-type ATPases have 2 components, CF(1) - the catalytic core - and CF(0) - the membrane proton channel. CF(1) has five subunits: alpha(3), beta(3), gamma(1), delta(1), epsilon(1). CF(0) has three main subunits: a, b and c.

It is found in the cell inner membrane. Its function is as follows. Produces ATP from ADP in the presence of a proton gradient across the membrane. The gamma chain is believed to be important in regulating ATPase activity and the flow of protons through the CF(0) complex. The sequence is that of ATP synthase gamma chain from Acidiphilium cryptum (strain JF-5).